We begin with the raw amino-acid sequence, 1246 residues long: Putative helicase L115 (1246 aa).

The interval 1–21 (MSKTITKKVNKKTKKSTKINP) is disordered. The Helicase ATP-binding domain maps to 872 to 1030 (AKFTDGYHGF…YYMLKMLQTG (159 aa)). Position 885–892 (885–892 (SDVGSGKT)) interacts with ATP.

The polypeptide is Putative helicase L115 (Acanthamoeba polyphaga (Amoeba)).